We begin with the raw amino-acid sequence, 181 residues long: Ribulose bisphosphate carboxylase small subunit 3B, chloroplastic (181 aa).

Residues 1-54 constitute a chloroplast transit peptide; it reads MASSMLSSAAVVTSPAQATMVAPFTGLKSSAAFPVTRKTNKDITSIASNGGRVS.

Belongs to the RuBisCO small chain family. Heterohexadecamer of 8 large and 8 small subunits.

It is found in the plastid. The protein resides in the chloroplast. Its function is as follows. RuBisCO catalyzes two reactions: the carboxylation of D-ribulose 1,5-bisphosphate, the primary event in carbon dioxide fixation, as well as the oxidative fragmentation of the pentose substrate. Both reactions occur simultaneously and in competition at the same active site. Although the small subunit is not catalytic it is essential for maximal activity. The protein is Ribulose bisphosphate carboxylase small subunit 3B, chloroplastic (RBCS-3B) of Arabidopsis thaliana (Mouse-ear cress).